Consider the following 901-residue polypeptide: Cyanophycin synthetase (901 aa).

The region spanning 224 to 478 (KRILAASGVP…VAGAVMDMLF (255 aa)) is the ATP-grasp domain. An ATP-binding site is contributed by 493-499 (GTNGKTT).

This sequence in the C-terminal section; belongs to the MurCDEF family. As to quaternary structure, homodimer.

The enzyme catalyses [L-4-(L-arginin-2-N-yl)aspartate](n) + L-aspartate + ATP = [L-4-(L-arginin-2-N-yl)aspartate](n)-L-aspartate + ADP + phosphate + H(+). It catalyses the reaction [L-4-(L-arginin-2-N-yl)aspartate](n)-L-aspartate + L-arginine + ATP = [L-4-(L-arginin-2-N-yl)aspartate](n+1) + ADP + phosphate + H(+). Catalyzes the ATP-dependent polymerization of arginine and aspartate to multi-L-arginyl-poly-L-aspartic acid (cyanophycin; a water-insoluble reserve polymer). The protein is Cyanophycin synthetase (cphA) of Trichormus variabilis (strain ATCC 29413 / PCC 7937) (Anabaena variabilis).